The chain runs to 202 residues: Glycerol-3-phosphate acyltransferase (202 aa).

Transmembrane regions (helical) follow at residues 2–22 (ANLL…AVVV), 85–105 (LAMV…HRFA), 119–139 (AINP…AFFF), and 158–178 (VLME…ILLI).

The protein belongs to the PlsY family. As to quaternary structure, probably interacts with PlsX.

It localises to the cell inner membrane. It catalyses the reaction an acyl phosphate + sn-glycerol 3-phosphate = a 1-acyl-sn-glycero-3-phosphate + phosphate. It functions in the pathway lipid metabolism; phospholipid metabolism. Functionally, catalyzes the transfer of an acyl group from acyl-phosphate (acyl-PO(4)) to glycerol-3-phosphate (G3P) to form lysophosphatidic acid (LPA). This enzyme utilizes acyl-phosphate as fatty acyl donor, but not acyl-CoA or acyl-ACP. The chain is Glycerol-3-phosphate acyltransferase from Cupriavidus pinatubonensis (strain JMP 134 / LMG 1197) (Cupriavidus necator (strain JMP 134)).